The chain runs to 138 residues: Protein FAM136A (138 aa).

A2 is subject to N-acetylalanine. T124 and T126 each carry phosphothreonine.

This sequence belongs to the FAM136 family.

In Bos taurus (Bovine), this protein is Protein FAM136A (FAM136A).